Reading from the N-terminus, the 370-residue chain is Actin-related protein 2/3 complex subunit 1A (370 aa).

WD repeat units follow at residues 6–45 (FLLE…WTKA), 50–89 (EHNG…WKPT), 140–179 (PIRS…VDEK), 202–241 (GTGG…QVST), 244–284 (TEFL…TFVS), and 322–365 (LHQN…SSIQ).

It belongs to the WD repeat ARPC1 family. Probable component of the Arp2/3 complex in which it may replace ARPC1B.

The protein resides in the cytoplasm. The protein localises to the cytoskeleton. Its subcellular location is the nucleus. In terms of biological role, probably functions as a component of the Arp2/3 complex which is involved in regulation of actin polymerization and together with an activating nucleation-promoting factor (NPF) mediates the formation of branched actin networks. In addition to its role in the cytoplasmic cytoskeleton, the Arp2/3 complex also promotes actin polymerization in the nucleus, thereby regulating gene transcription and repair of damaged DNA. The polypeptide is Actin-related protein 2/3 complex subunit 1A (Arpc1a) (Rattus norvegicus (Rat)).